Reading from the N-terminus, the 247-residue chain is 5'-nucleotidase SurE (247 aa).

A divalent metal cation contacts are provided by D8, D9, S39, and N91.

The protein belongs to the SurE nucleotidase family. The cofactor is a divalent metal cation.

The protein resides in the cytoplasm. The catalysed reaction is a ribonucleoside 5'-phosphate + H2O = a ribonucleoside + phosphate. Its function is as follows. Nucleotidase that shows phosphatase activity on nucleoside 5'-monophosphates. The polypeptide is 5'-nucleotidase SurE (Azoarcus sp. (strain BH72)).